A 113-amino-acid chain; its full sequence is Small ribosomal subunit protein bS6 (113 aa).

This sequence belongs to the bacterial ribosomal protein bS6 family.

Its function is as follows. Binds together with bS18 to 16S ribosomal RNA. This Vesicomyosocius okutanii subsp. Calyptogena okutanii (strain HA) protein is Small ribosomal subunit protein bS6.